Consider the following 442-residue polypeptide: MKKIPSIGVVSLGCPKATVDSERILTQLRAEGYLLVGDYANADVVVVNTCGFIDAAVEESLEAIGEALDENGKVVVTGCLGAREGGDFVRGAHPKVLAVTGPNQAGAVLDAIHAALPPAHDPYTDLVPPQGLRLTPPHYAYLKISEGCNQSCSFCIIPSMRGKLVSRAPDDILREAEALVAGGAKELLVISQDTGAYGVDRKYRTAFHNGRPLKTRITDLCAALGELGVWVRLHYVYPYPHIDELLPLMAEGKILPYLDVPLQHGSPRILKAMRRPAAAEKTLDRILGWRQAVPDLIIRSTFIVGFPGETDADFAELLDFLRAAELDRVGCFAYSAVEGAPANAIAGAVPEPVKEERRAAFMAVQEAISRQRLQRRVGQRQRVLVDAMARGGRVIARSASDAPEIDGVVHLGKAAGLQVGDWVEVAITRADAHDLYGMVVSA.

In terms of domain architecture, MTTase N-terminal spans 5-117 (PSIGVVSLGC…VLDAIHAALP (113 aa)). Residues Cys14, Cys50, Cys79, Cys148, Cys152, and Cys155 each coordinate [4Fe-4S] cluster. Residues 134–371 (LTPPHYAYLK…MAVQEAISRQ (238 aa)) form the Radical SAM core domain. The TRAM domain maps to 374–441 (QRRVGQRQRV…AHDLYGMVVS (68 aa)).

The protein belongs to the methylthiotransferase family. RimO subfamily. [4Fe-4S] cluster is required as a cofactor.

It is found in the cytoplasm. The enzyme catalyses L-aspartate(89)-[ribosomal protein uS12]-hydrogen + (sulfur carrier)-SH + AH2 + 2 S-adenosyl-L-methionine = 3-methylsulfanyl-L-aspartate(89)-[ribosomal protein uS12]-hydrogen + (sulfur carrier)-H + 5'-deoxyadenosine + L-methionine + A + S-adenosyl-L-homocysteine + 2 H(+). Its function is as follows. Catalyzes the methylthiolation of an aspartic acid residue of ribosomal protein uS12. The sequence is that of Ribosomal protein uS12 methylthiotransferase RimO from Acidithiobacillus ferrooxidans (strain ATCC 53993 / BNL-5-31) (Leptospirillum ferrooxidans (ATCC 53993)).